Here is a 1035-residue protein sequence, read N- to C-terminus: MSSKTEIPIITDEGDFSAEYETFCQAMNGVADGTFICVSVFGPQSSGKSTLLNDLFGTSFKTMDLSAGRTQTTKGIMARAVDFQTKVAPRVLILDCEGSDSRERNQQEAQNIERHIGCFAAAVSDLLIINVWNHDIGRHSAANYNILSTIFDIYFRSLLKARRKSGNHRPLILLIAIRDAEEDGAELTQRTFESDVHHIYEQSVPKQYHGSFRDYFCLRFWFIPHRRYMKSLYDEKITQLKTDIKEIFDSLLGAETATTLIPLTDSSIYYNNIWDIVRTDKDLDIPSQREIVSNIRCEEFYLEAIEQFSSQVGKVFADVTAAIQVSLGQQSSTFLEQSPDAVKDYPITKLHNACNSFKLTKVLMDLSQECVALYRRKTRHYIPKVVTQWATKLNDDVLAGLKKVAHSFAKGIRESTCQALGAVTAPFRVQITQWLERHEYSDDYASNTNTVDILVPDLISDLTFPQKRLTDLMGLLGAATRVFHKCISVNWAHEYSGLCDTGILVNLPPNDVGPNSNVRIGDNAIETNAGSSVRLSVGYEASEPMVDAHIDDSGAFFSDIRQTGVYSPHLYAFLESLSLSTYGKALSLQKLPAAPPDVANAYDAVCLLHTIILLWYCETMMPLSLIYDITPEIDHVIPESNALFCETMGSILAAVAEAVSSQTRTITASMTQATARLMDDKLYVTLGSLRGVIYESARKTLERSFFSLLSSAFVAPDHQGLLYLQTRLSSPSIYFDLHFDSSSRSSPTDSILPDTQNPVYKQYTDIYLFSTLPALLSPLPRAYNTVGTRLSSGSSSIQSLLPRYRAVPIVAALDMSAFYIPQAALSSFMDRVDAEIIELINKSLGEFFSKSFPLVLQNKIHTKLVYDDQGAQRSYISENSILTEFLSEKKGLISMAQLFEGGTLITENLHSVTIKPTSQEKIDAMLRCAEAEWDKTYQEALEIYRTNKHKDKYKWVWLGLCVFLMLTRKWVYAVLLSKYCLCITILLLSVGLFVYQRTTPDERNASFSIVATSIRERDVGQFWDATKRLAQKVIH.

Residues 32 to 267 (DGTFICVSVF…TTLIPLTDSS (236 aa)) enclose the GB1/RHD3-type G domain. Position 42–49 (42–49 (GPQSSGKS)) interacts with GTP.

Belongs to the TRAFAC class dynamin-like GTPase superfamily. GB1/RHD3 GTPase family. RHD3 subfamily.

The protein resides in the endoplasmic reticulum membrane. Probable GTP-binding protein that may be involved in cell development. The sequence is that of Protein SEY1 homolog from Giardia intestinalis (strain ATCC 50803 / WB clone C6) (Giardia lamblia).